Consider the following 312-residue polypeptide: MTEQTEKDKKQIYNLNKLQKRLRRNVGNAIADFNMIEEGDKVMVCLSGGKDSYTLLDILLNLKFSAPIHFDIVAVNLDQKQPGFPEHVLPQYLESIGVEYKIVEENTYGIVKEKIPEGKTTCSLCSRLRRGILYRTATELGATKIALGHHRDDMLATLFLNMFYGGKLKSMPPKLISDDGKQIVIRPLAYCKEKDIEKYAVAKQFPIIPCNLCGSQPNLQRQVVKEMLNTWDRQYPGRLETMFSAMQNVVPSHLCDPNLFDFKNIRRGQILEGVSGDIAFDKEELPPMPQFADEGESADFSGENLIQFKEVN.

The short motif at 47 to 52 (SGGKDS) is the PP-loop motif element. [4Fe-4S] cluster contacts are provided by Cys122, Cys125, and Cys213.

This sequence belongs to the TtcA family. Homodimer. Mg(2+) is required as a cofactor. Requires [4Fe-4S] cluster as cofactor.

The protein localises to the cytoplasm. The enzyme catalyses cytidine(32) in tRNA + S-sulfanyl-L-cysteinyl-[cysteine desulfurase] + AH2 + ATP = 2-thiocytidine(32) in tRNA + L-cysteinyl-[cysteine desulfurase] + A + AMP + diphosphate + H(+). Its pathway is tRNA modification. In terms of biological role, catalyzes the ATP-dependent 2-thiolation of cytidine in position 32 of tRNA, to form 2-thiocytidine (s(2)C32). The sulfur atoms are provided by the cysteine/cysteine desulfurase (IscS) system. This is tRNA-cytidine(32) 2-sulfurtransferase from Actinobacillus succinogenes (strain ATCC 55618 / DSM 22257 / CCUG 43843 / 130Z).